The primary structure comprises 94 residues: NADH dehydrogenase [ubiquinone] iron-sulfur protein 3, mitochondrial (94 aa).

The protein belongs to the complex I 30 kDa subunit family. Core subunit of respiratory chain NADH dehydrogenase (Complex I) which is composed of 45 different subunits. Interacts with NDUFAF3. Interacts with RAB5IF. Found in subcomplexes containing subunits NDUFS2, MT-ND1 and NDUFA13.

The protein localises to the mitochondrion inner membrane. The catalysed reaction is a ubiquinone + NADH + 5 H(+)(in) = a ubiquinol + NAD(+) + 4 H(+)(out). Its function is as follows. Core subunit of the mitochondrial membrane respiratory chain NADH dehydrogenase (Complex I) which catalyzes electron transfer from NADH through the respiratory chain, using ubiquinone as an electron acceptor. Essential for the catalytic activity and assembly of complex I. This is NADH dehydrogenase [ubiquinone] iron-sulfur protein 3, mitochondrial from Mesocricetus auratus (Golden hamster).